We begin with the raw amino-acid sequence, 347 residues long: Phosphate acyltransferase (347 aa).

The protein belongs to the PlsX family. Homodimer. Probably interacts with PlsY.

Its subcellular location is the cytoplasm. The catalysed reaction is a fatty acyl-[ACP] + phosphate = an acyl phosphate + holo-[ACP]. Its pathway is lipid metabolism; phospholipid metabolism. Catalyzes the reversible formation of acyl-phosphate (acyl-PO(4)) from acyl-[acyl-carrier-protein] (acyl-ACP). This enzyme utilizes acyl-ACP as fatty acyl donor, but not acyl-CoA. The sequence is that of Phosphate acyltransferase from Syntrophotalea carbinolica (strain DSM 2380 / NBRC 103641 / GraBd1) (Pelobacter carbinolicus).